Consider the following 129-residue polypeptide: Small ribosomal subunit protein uS11 (129 aa).

The protein belongs to the universal ribosomal protein uS11 family. In terms of assembly, part of the 30S ribosomal subunit. Interacts with proteins S7 and S18. Binds to IF-3.

Functionally, located on the platform of the 30S subunit, it bridges several disparate RNA helices of the 16S rRNA. Forms part of the Shine-Dalgarno cleft in the 70S ribosome. In Marinobacter nauticus (strain ATCC 700491 / DSM 11845 / VT8) (Marinobacter aquaeolei), this protein is Small ribosomal subunit protein uS11.